The primary structure comprises 589 residues: Bifunctional protein TrpGD (589 aa).

One can recognise a Glutamine amidotransferase type-1 domain in the interval 46-241 (RVIVIDNYDS…LNIQDIQVKK (196 aa)). 99–101 (GPG) lines the L-glutamine pocket. Cysteine 126 (nucleophile; for GATase activity) is an active-site residue. Residues glutamine 130 and 176 to 177 (SL) contribute to the L-glutamine site. Residues histidine 215 and glutamate 217 each act as for GATase activity in the active site. Residues 253-589 (ALKKLVEFED…MDYQKTLGNS (337 aa)) are anthranilate phosphoribosyltransferase.

The protein in the C-terminal section; belongs to the anthranilate phosphoribosyltransferase family. Heterotetramer consisting of two non-identical subunits: a beta subunit (TrpG) and a large alpha subunit (TrpE).

The enzyme catalyses chorismate + L-glutamine = anthranilate + pyruvate + L-glutamate + H(+). It carries out the reaction N-(5-phospho-beta-D-ribosyl)anthranilate + diphosphate = 5-phospho-alpha-D-ribose 1-diphosphate + anthranilate. Its pathway is amino-acid biosynthesis; L-tryptophan biosynthesis; L-tryptophan from chorismate: step 1/5. It functions in the pathway amino-acid biosynthesis; L-tryptophan biosynthesis; L-tryptophan from chorismate: step 2/5. Part of a heterotetrameric complex that catalyzes the two-step biosynthesis of anthranilate, an intermediate in the biosynthesis of L-tryptophan. In the first step, the glutamine-binding beta subunit (TrpG) of anthranilate synthase (AS) provides the glutamine amidotransferase activity which generates ammonia as a substrate that, along with chorismate, is used in the second step, catalyzed by the large alpha subunit of AS (TrpE) to produce anthranilate. In the absence of TrpG, TrpE can synthesize anthranilate directly from chorismate and high concentrations of ammonia. In addition to synthesizing anthranilate, it also catalyzes the second step of the pathway, the transfer of the phosphoribosyl group of 5-phosphorylribose-1-pyrophosphate (PRPP) to anthranilate. The polypeptide is Bifunctional protein TrpGD (trpGD) (Thermotoga maritima (strain ATCC 43589 / DSM 3109 / JCM 10099 / NBRC 100826 / MSB8)).